The following is a 100-amino-acid chain: Large ribosomal subunit protein uL23 (100 aa).

This sequence belongs to the universal ribosomal protein uL23 family. Part of the 50S ribosomal subunit. Contacts protein L29, and trigger factor when it is bound to the ribosome.

One of the early assembly proteins it binds 23S rRNA. One of the proteins that surrounds the polypeptide exit tunnel on the outside of the ribosome. Forms the main docking site for trigger factor binding to the ribosome. The protein is Large ribosomal subunit protein uL23 of Shewanella piezotolerans (strain WP3 / JCM 13877).